Reading from the N-terminus, the 449-residue chain is Lipase (449 aa).

Positions 1 to 23 are cleaved as a signal peptide; the sequence is MGVFDYKNLGTEASKTLFADATA. Residues 58–77 form a disordered region; that stretch reads RQHRLPGSDPPAFPGILTRK. Catalysis depends on S206, which acts as the Charge relay system. G318, D387, and D396 together coordinate Ca(2+). Hemolysin-type calcium-binding repeat units lie at residues 372–389 and 390–407; these read IGSDGNDLIQGGKGADFI and EGGKGNDTIRDNSGHNTF.

The protein belongs to the AB hydrolase superfamily. Lipase family.

The enzyme catalyses a triacylglycerol + H2O = a diacylglycerol + a fatty acid + H(+). This Pseudomonas fluorescens protein is Lipase.